A 448-amino-acid chain; its full sequence is Glucose-6-phosphate isomerase (448 aa).

E290 serves as the catalytic Proton donor. Active-site residues include H311 and K425.

Belongs to the GPI family.

Its subcellular location is the cytoplasm. The enzyme catalyses alpha-D-glucose 6-phosphate = beta-D-fructose 6-phosphate. It functions in the pathway carbohydrate biosynthesis; gluconeogenesis. Its pathway is carbohydrate degradation; glycolysis; D-glyceraldehyde 3-phosphate and glycerone phosphate from D-glucose: step 2/4. In terms of biological role, catalyzes the reversible isomerization of glucose-6-phosphate to fructose-6-phosphate. The polypeptide is Glucose-6-phosphate isomerase (Lactococcus lactis subsp. lactis (strain IL1403) (Streptococcus lactis)).